A 201-amino-acid polypeptide reads, in one-letter code: UPF0301 protein R00917 (201 aa).

It belongs to the UPF0301 (AlgH) family.

The polypeptide is UPF0301 protein R00917 (Rhizobium meliloti (strain 1021) (Ensifer meliloti)).